The chain runs to 328 residues: Probable membrane-associated kinase regulator 4 (328 aa).

The tract at residues 213–253 (GQIKTERPKKQSNGSVSGSHRRSFSVSMRRQAAKSSNNKSS) is disordered. Positions 223–240 (QSNGSVSGSHRRSFSVSM) are enriched in polar residues.

The protein resides in the cell membrane. This is Probable membrane-associated kinase regulator 4 (MAKR4) from Arabidopsis thaliana (Mouse-ear cress).